A 571-amino-acid chain; its full sequence is Proline--tRNA ligase (571 aa).

The protein belongs to the class-II aminoacyl-tRNA synthetase family. ProS type 1 subfamily. Homodimer.

The protein localises to the cytoplasm. The catalysed reaction is tRNA(Pro) + L-proline + ATP = L-prolyl-tRNA(Pro) + AMP + diphosphate. In terms of biological role, catalyzes the attachment of proline to tRNA(Pro) in a two-step reaction: proline is first activated by ATP to form Pro-AMP and then transferred to the acceptor end of tRNA(Pro). As ProRS can inadvertently accommodate and process non-cognate amino acids such as alanine and cysteine, to avoid such errors it has two additional distinct editing activities against alanine. One activity is designated as 'pretransfer' editing and involves the tRNA(Pro)-independent hydrolysis of activated Ala-AMP. The other activity is designated 'posttransfer' editing and involves deacylation of mischarged Ala-tRNA(Pro). The misacylated Cys-tRNA(Pro) is not edited by ProRS. The polypeptide is Proline--tRNA ligase (Vibrio cholerae serotype O1 (strain ATCC 39541 / Classical Ogawa 395 / O395)).